The following is a 156-amino-acid chain: Small ribosomal subunit protein uS7 (156 aa).

This sequence belongs to the universal ribosomal protein uS7 family. In terms of assembly, part of the 30S ribosomal subunit. Contacts proteins S9 and S11.

Functionally, one of the primary rRNA binding proteins, it binds directly to 16S rRNA where it nucleates assembly of the head domain of the 30S subunit. Is located at the subunit interface close to the decoding center, probably blocks exit of the E-site tRNA. In Campylobacter curvus (strain 525.92), this protein is Small ribosomal subunit protein uS7.